The primary structure comprises 525 residues: BTB/POZ domain-containing protein At1g50280 (525 aa).

Residues 5 to 79 enclose the BTB domain; sequence NDLKINLNGQ…CYHNGEILID (75 aa). The NPH3 domain maps to 200 to 466; the sequence is EWWFEDMTNL…IEALKSRCGN (267 aa).

It belongs to the NPH3 family.

It participates in protein modification; protein ubiquitination. May act as a substrate-specific adapter of an E3 ubiquitin-protein ligase complex (CUL3-RBX1-BTB) which mediates the ubiquitination and subsequent proteasomal degradation of target proteins. This chain is BTB/POZ domain-containing protein At1g50280, found in Arabidopsis thaliana (Mouse-ear cress).